The sequence spans 192 residues: Transcription termination/antitermination protein NusG (192 aa).

The region spanning 140 to 168 is the KOW domain; the sequence is VGEIVTVTDGPFETFMGTVEEIDQEKNRL.

It belongs to the NusG family.

Its function is as follows. Participates in transcription elongation, termination and antitermination. The chain is Transcription termination/antitermination protein NusG from Rickettsia conorii (strain ATCC VR-613 / Malish 7).